The chain runs to 297 residues: Phosphatidylinositol N-acetylglucosaminyltransferase subunit C (297 aa).

Helical transmembrane passes span V51–I71, L80–F100, W117–L137, S153–V173, S174–P194, S196–L216, S227–L244, and G250–I270.

Belongs to the PIGC family. In terms of assembly, component of the glycosylphosphatidylinositol-N-acetylglucosaminyltransferase (GPI-GnT) complex composed at least by PIGA, PIGC, PIGH, PIGP, PIGQ, PIGY and DPM2. Interacts with PIGQ. Interacts with the heterodimer PIGA:PIGH.

It is found in the endoplasmic reticulum membrane. Its pathway is glycolipid biosynthesis; glycosylphosphatidylinositol-anchor biosynthesis. Functionally, part of the glycosylphosphatidylinositol-N-acetylglucosaminyltransferase (GPI-GnT) complex that catalyzes the transfer of N-acetylglucosamine from UDP-N-acetylglucosamine to phosphatidylinositol and participates in the first step of GPI biosynthesis. The protein is Phosphatidylinositol N-acetylglucosaminyltransferase subunit C of Homo sapiens (Human).